Consider the following 82-residue polypeptide: Endocuticle structural glycoprotein ABD-5 (82 aa).

A Pyrrolidone carboxylic acid modification is found at Gln-1. The Chitin-binding type R&amp;R domain maps to 18–82 (LGQYNFAYRT…ENGYQPRVQS (65 aa)).

Its function is as follows. Component of the soft endocuticle of migratory locust. The polypeptide is Endocuticle structural glycoprotein ABD-5 (Locusta migratoria (Migratory locust)).